Reading from the N-terminus, the 160-residue chain is Transcription elongation factor GreA (160 aa).

Positions Met1 to Arg72 form a coiled coil.

The protein belongs to the GreA/GreB family.

Necessary for efficient RNA polymerase transcription elongation past template-encoded arresting sites. The arresting sites in DNA have the property of trapping a certain fraction of elongating RNA polymerases that pass through, resulting in locked ternary complexes. Cleavage of the nascent transcript by cleavage factors such as GreA or GreB allows the resumption of elongation from the new 3'terminus. GreA releases sequences of 2 to 3 nucleotides. This Streptococcus pneumoniae (strain Hungary19A-6) protein is Transcription elongation factor GreA.